The chain runs to 2876 residues: Nipped-B-like protein B (2876 aa).

2 stretches are compositionally biased toward polar residues: residues 124 to 142 and 149 to 167; these read PQNS…TTIT and YVQT…QNSP. Disordered regions lie at residues 124 to 197, 246 to 367, 439 to 494, and 525 to 1017; these read PQNS…PIQQ, NDEG…SDAE, RESA…AGNK, and EGPV…FPNY. Over residues 276–290 the composition is skewed to pro residues; it reads GPRPPLILQSPPPYT. The span at 439–457 shows a compositional bias: basic and acidic residues; sequence RESAIERERCSKEVQDKDK. The segment covering 471–480 has biased composition (low complexity); it reads PGAAGTAGAS. The span at 481-490 shows a compositional bias: gly residues; sequence GTPGVGGGCN. 3 stretches are compositionally biased toward basic and acidic residues: residues 556–577, 586–955, and 962–1005; these read SKTD…KQRV, VDGR…EQRS, and VKQE…HKPQ. The short motif at 1068–1081 is the PxVxL motif element; it reads NKGAKPVVVLKKLS. Disordered stretches follow at residues 1088–1229 and 1724–1747; these read MISN…EPKL and TEKA…KDVE. Residues 1090-1100 show a composition bias toward low complexity; it reads SNSRSSKSSRS. Basic and acidic residues-rich tracts occupy residues 1104-1119 and 1156-1183; these read RFRE…ERVK and KDRD…DSRR. Residues 1212-1223 are compositionally biased toward basic residues; that stretch reads KLKKKEKQKKRK. HEAT repeat units follow at residues 1803–1841, 1879–1917, 1981–2020, 2203–2241, and 2349–2387; these read AQSF…VDPS, PQLT…EQPT, YDWF…HILK, VVIK…QDPG, and LIHP…KYTG. Disordered regions lie at residues 2516-2590 and 2728-2774; these read EVVK…DSDL and ALLG…GHRN. A compositionally biased stretch (basic residues) spans 2519 to 2537; the sequence is KKKKKKKKKKKQKQKRGKK. Residues 2548-2563 show a composition bias toward low complexity; the sequence is RSSSSSSSSSSSSSDS. Residues 2762–2774 are compositionally biased toward basic and acidic residues; that stretch reads RTGDSAEASGHRN.

This sequence belongs to the SCC2/Nipped-B family.

It localises to the nucleus. Functionally, may play a structural role in chromatin. Involved in sister chromatid cohesion, possibly by facilitating the cohesin complex loading. Transcription factor, which may promote cortical neuron migration during brain development by regulating the transcription of crucial genes in this process. The protein is Nipped-B-like protein B (nipblb) of Danio rerio (Zebrafish).